Here is a 232-residue protein sequence, read N- to C-terminus: MNKVITDLDKALSGLKDGDTILVGGFGLCGIPEYAIDYIYKKGIKDLIVVSNNCGVDDFGLGILLEKKQIKKIIASYVGENKIFESQMLNGEIEVVLTPQGTLAENLRAGGAGIPAYYTPTGVGTLIAQGKESREFNGKEYILERAITGDYGLIKAYKSDTLGNLVFRKTARNFNPLCAMAAKICVAEVEEIVPAGELDPDEIHLPGIYVQHIYKGEKFEKRIEKTTTRSAK.

Position 24-30 (24-30) interacts with CoA; the sequence is GGFGLCG.

This sequence belongs to the 3-oxoacid CoA-transferase subunit A family. Heterodimer of a subunit A and a subunit B.

The catalysed reaction is a 3-oxo acid + succinyl-CoA = a 3-oxoacyl-CoA + succinate. The chain is Succinyl-CoA:3-ketoacid coenzyme A transferase subunit A (scoA) from Helicobacter pylori (strain J99 / ATCC 700824) (Campylobacter pylori J99).